The primary structure comprises 223 residues: NADH-quinone oxidoreductase subunit C (223 aa).

It belongs to the complex I 30 kDa subunit family. In terms of assembly, NDH-1 is composed of 14 different subunits. Subunits NuoB, C, D, E, F, and G constitute the peripheral sector of the complex.

It localises to the cell inner membrane. It carries out the reaction a quinone + NADH + 5 H(+)(in) = a quinol + NAD(+) + 4 H(+)(out). Its function is as follows. NDH-1 shuttles electrons from NADH, via FMN and iron-sulfur (Fe-S) centers, to quinones in the respiratory chain. The immediate electron acceptor for the enzyme in this species is believed to be ubiquinone. Couples the redox reaction to proton translocation (for every two electrons transferred, four hydrogen ions are translocated across the cytoplasmic membrane), and thus conserves the redox energy in a proton gradient. This chain is NADH-quinone oxidoreductase subunit C, found in Hydrogenovibrio crunogenus (strain DSM 25203 / XCL-2) (Thiomicrospira crunogena).